The following is a 248-amino-acid chain: Small ribosomal subunit protein uS3 (248 aa).

The 69-residue stretch at Ile-38 to Lys-106 folds into the KH type-2 domain. Basic and acidic residues predominate over residues Ser-214–Ala-230. The disordered stretch occupies residues Ser-214–Gly-248.

The protein belongs to the universal ribosomal protein uS3 family. In terms of assembly, part of the 30S ribosomal subunit. Forms a tight complex with proteins S10 and S14.

In terms of biological role, binds the lower part of the 30S subunit head. Binds mRNA in the 70S ribosome, positioning it for translation. The sequence is that of Small ribosomal subunit protein uS3 from Corynebacterium glutamicum (strain R).